Reading from the N-terminus, the 366-residue chain is Heat-inducible transcription repressor HrcA (366 aa).

The span at 298 to 309 shows a compositional bias: polar residues; that stretch reads SSGYGQSSTPSA. A disordered region spans residues 298-318; it reads SSGYGQSSTPSANVEHEEYDT.

The protein belongs to the HrcA family.

In terms of biological role, negative regulator of class I heat shock genes (grpE-dnaK-dnaJ and groELS operons). Prevents heat-shock induction of these operons. This Bifidobacterium animalis subsp. lactis (strain AD011) protein is Heat-inducible transcription repressor HrcA.